A 71-amino-acid polypeptide reads, in one-letter code: Brevinin-1V (71 aa).

Residues 1-22 form the signal peptide; the sequence is MFTLKKSLLLLFFLGTINLSLC. The propeptide occupies 23-45; it reads EQERDADEEERRDDSEERDIEVE. A disulfide bond links Cys-65 and Cys-71.

The protein belongs to the frog skin active peptide (FSAP) family. Brevinin subfamily. Expressed by the skin glands.

The protein resides in the secreted. Has antimicrobial activity against Gram-positive bacteria and fungi but has weak or no activity against a range of Gram-negative bacteria except P.faecalis. Active against the Gram-positive bacteria E.faecium 091299 (MIC=37.5 uM), S.aureus ATCC 25923 (MIC=2.4 uM), S.carnosus KHS (MIC=19 uM), B.licheniformis X39 (MIC=2.4 uM) and R.rhodochrous X15 (MIC=1.2 uM) and a lower activity against E.faecalis 981 (MIC=75 uM). Active against the Gram-negative bacterium P.faecalis X29 (MIC=9.5 uM) is virtually inactive against E.coli ATCC 25922 (MIC=150 uM), and inactive against P.aeruginosa and S.typhi. Has antifungal activity against C.albicans ATCC 2002 (MIC=9.5 uM) and is also active against the slime mold 090223 (MIC=1.2 uM). Has low hemolytic activity against human erythrocytes (LC(50)=75 uM). The protein is Brevinin-1V of Odorrana hainanensis (Odor frog).